Reading from the N-terminus, the 281-residue chain is MKTYLELMRAGNCAMAAFAGLIGVLIAYNILSSASPYVSLSLFDTSLIFAIVFLVTGAGNGLNDYFDIEIDKVNKPSRPIPSGKISLKSALYFSLFLFITGITLAFLVNPLCGIIALFNSMVLILYAQSLKRTPFFGNASVGYLTGSTFLFGGAVFGMAGLQALVVLFLLATLATIAREIVKDVEDIVGDKKDGARTLPILIGAKKASYIAAAFGFTAMLASPVPYLQSILNEQYLFVVAIADIFFLIAVYQILGKKDAARSSKLFKFAMLFALISFIVGA.

Transmembrane regions (helical) follow at residues 14-34 (AMAA…LSSA), 38-58 (VSLS…VTGA), 95-115 (LFLF…CGII), 149-169 (FLFG…VLFL), 207-227 (ASYI…VPYL), 235-255 (YLFV…QILG), and 259-279 (AARS…SFIV).

This sequence belongs to the UbiA prenyltransferase family. DGGGP synthase subfamily. The cofactor is Mg(2+).

The protein resides in the cell membrane. It catalyses the reaction sn-3-O-(geranylgeranyl)glycerol 1-phosphate + (2E,6E,10E)-geranylgeranyl diphosphate = 2,3-bis-O-(geranylgeranyl)-sn-glycerol 1-phosphate + diphosphate. It participates in membrane lipid metabolism; glycerophospholipid metabolism. Its function is as follows. Prenyltransferase that catalyzes the transfer of the geranylgeranyl moiety of geranylgeranyl diphosphate (GGPP) to the C2 hydroxyl of (S)-3-O-geranylgeranylglyceryl phosphate (GGGP). This reaction is the second ether-bond-formation step in the biosynthesis of archaeal membrane lipids. The chain is Digeranylgeranylglyceryl phosphate synthase from Methanococcoides burtonii (strain DSM 6242 / NBRC 107633 / OCM 468 / ACE-M).